Reading from the N-terminus, the 289-residue chain is 4-hydroxy-tetrahydrodipicolinate synthase (289 aa).

Pyruvate is bound at residue threonine 43. The Proton donor/acceptor role is filled by tyrosine 131. The Schiff-base intermediate with substrate role is filled by lysine 160. Valine 200 contacts pyruvate.

This sequence belongs to the DapA family. In terms of assembly, homotetramer; dimer of dimers.

The protein resides in the cytoplasm. The catalysed reaction is L-aspartate 4-semialdehyde + pyruvate = (2S,4S)-4-hydroxy-2,3,4,5-tetrahydrodipicolinate + H2O + H(+). Its pathway is amino-acid biosynthesis; L-lysine biosynthesis via DAP pathway; (S)-tetrahydrodipicolinate from L-aspartate: step 3/4. Catalyzes the condensation of (S)-aspartate-beta-semialdehyde [(S)-ASA] and pyruvate to 4-hydroxy-tetrahydrodipicolinate (HTPA). This Methanococcus maripaludis (strain DSM 14266 / JCM 13030 / NBRC 101832 / S2 / LL) protein is 4-hydroxy-tetrahydrodipicolinate synthase.